A 306-amino-acid polypeptide reads, in one-letter code: Ciliary microtubule inner protein 2B (306 aa).

Residues 61–92 (QSNPFPPPRDHSFDGGSQELGGRRQHPGDPNL) are disordered.

The protein belongs to the CIMIP2 family. Expressed in airway epithelial cells.

It localises to the cytoplasm. Its subcellular location is the cytoskeleton. The protein localises to the cilium axoneme. Its function is as follows. Microtubule inner protein (MIP) part of the dynein-decorated doublet microtubules (DMTs) in cilia axoneme, which is required for motile cilia beating. The protein is Ciliary microtubule inner protein 2B (cimip2b) of Xenopus tropicalis (Western clawed frog).